Here is a 198-residue protein sequence, read N- to C-terminus: Translation initiation factor IF-3 (198 aa).

Residues S168–E198 are disordered. Positions K178–E198 are enriched in basic and acidic residues.

Belongs to the IF-3 family. As to quaternary structure, monomer.

Its subcellular location is the cytoplasm. Its function is as follows. IF-3 binds to the 30S ribosomal subunit and shifts the equilibrium between 70S ribosomes and their 50S and 30S subunits in favor of the free subunits, thus enhancing the availability of 30S subunits on which protein synthesis initiation begins. This Phocaeicola vulgatus (strain ATCC 8482 / DSM 1447 / JCM 5826 / CCUG 4940 / NBRC 14291 / NCTC 11154) (Bacteroides vulgatus) protein is Translation initiation factor IF-3.